A 483-amino-acid chain; its full sequence is MLTLDTLNVMLAVSEEGLIEEMIIALLASPQLAVFFEKFPRLKAAITDDVPRWREALRSRLKDARVPPELTEEVMCYQQSQLLSTPQFIVQLPQILDLLHRLNSPWAEQARQLVDANSTITSALHTLFLQRWRLSLIVQATTLNQQLLEEEREQLLSEVQERMTLSGQLEPILADNNTAAGRLWDMSAGQLKRGDYQLIVKYGEFLNEQPELKRLAEQLGRSREAKSIPRNDAQMETFRTMVREPATVPEQVDGLQQSDDILRLLPPELATLGITELEYEFYRRLVEKQLLTYRLHGESWREKVIERPVVHKDYDEQPRGPFIVCVDASGSMGGFNEQCAKAFCLALMRIALAENRRCYIMLFSTEIVRYELSGPQGIEQAIRFLSQQFRGGTDLASCFRAIMERLQSREWFDADAVVISDFIAQRLPDDVTSKVKELQRVHQHRFHAVAMSAHGKPGIMRIFDHIWRFDTGMRSRLLRRWRR.

It belongs to the ViaA family. In terms of assembly, homodimer. Interacts with RavA.

It localises to the cytoplasm. Functionally, component of the RavA-ViaA chaperone complex, which may act on the membrane to optimize the function of some of the respiratory chains. ViaA stimulates the ATPase activity of RavA. The sequence is that of Regulatory protein ViaA from Shigella boydii serotype 18 (strain CDC 3083-94 / BS512).